The following is a 273-amino-acid chain: Hydroxynaphthalene reductase arp2 (273 aa).

Positions 24, 70, 97, and 130 each coordinate NADP(+). Active-site proton donor residues include Ser146 and Ser147. Residues Tyr160, Lys164, Val193, and Ser195 each contribute to the NADP(+) site. The active-site Proton acceptor is Tyr160. Lys164 functions as the Lowers pKa of active site Tyr in the catalytic mechanism.

It belongs to the short-chain dehydrogenases/reductases (SDR) family.

The protein localises to the endosome. Its pathway is pigment biosynthesis; melanin biosynthesis. With respect to regulation, tricyclazole and pyroquilon inhibit arp2 hydroxynaphtalene reductase activity. In terms of biological role, hydroxynaphthalene reductase; part of the gene cluster that mediates the biosynthesis of dihydroxynaphthalene (DHN)-melanin, a bluish-green pigment and a structural component of the conidial wall. The first step of the pathway is the production of the heptaketide naphtopyrone YWA1 by the polyketide synthase alb1 though condensation of acetyl-CoA with malonyl-CoA. The naphtopyrone YWA1 is then converted to the pentaketide 1,3,6,8-tetrahydroxynaphthalene (1,3,6,8-THN) by the heptaketide hydrolyase ayg1 though chain-length shortening. 1,3,6,8-THN is substrate of the hydroxynaphthalene reductase arp2 to yield scytalone. The scytalone dehydratase arp1 then reduces scytalone to 1,3,8-THN. 1,3,8-THN is also substrate of the hydroxynaphthalene reductase arp2 to yield vermelone. Vermelone is further converted by the multicopper oxidase abr1 to 1,8-DHN. Finally the laccase abr2 transforms 1,8-DHN to DHN-melanin. DHN-melanin biosynthesis appears to be initiated in endosomes where early enzymes (abl1, ayg1, arp1 and arp2) localize, with exocytosis leading to melanin deposition on the cell surface where late enzymes (abr1 and abr2) localize. DHN-melanin is an important structural component of the outer cell wall and is required for the presence of conidial surface hydrophobins. DHN-melanin also plays a crucial role in fungal virulence, including a protective role against the host's immune defenses. DHN-melanin also protects conidia against amoeba predation. The polypeptide is Hydroxynaphthalene reductase arp2 (Aspergillus fumigatus (strain ATCC MYA-4609 / CBS 101355 / FGSC A1100 / Af293) (Neosartorya fumigata)).